We begin with the raw amino-acid sequence, 477 residues long: Proline--tRNA ligase (477 aa).

The protein belongs to the class-II aminoacyl-tRNA synthetase family. ProS type 3 subfamily. As to quaternary structure, homodimer.

It localises to the cytoplasm. The catalysed reaction is tRNA(Pro) + L-proline + ATP = L-prolyl-tRNA(Pro) + AMP + diphosphate. In terms of biological role, catalyzes the attachment of proline to tRNA(Pro) in a two-step reaction: proline is first activated by ATP to form Pro-AMP and then transferred to the acceptor end of tRNA(Pro). This is Proline--tRNA ligase from Methanocorpusculum labreanum (strain ATCC 43576 / DSM 4855 / Z).